A 72-amino-acid polypeptide reads, in one-letter code: Cell division protein ZapB (72 aa).

Positions 1–71 (MSLEILDQLE…IRSLLGKFDN (71 aa)) form a coiled coil.

It belongs to the ZapB family. In terms of assembly, homodimer. The ends of the coiled-coil dimer bind to each other, forming polymers. Interacts with FtsZ.

The protein resides in the cytoplasm. Non-essential, abundant cell division factor that is required for proper Z-ring formation. It is recruited early to the divisome by direct interaction with FtsZ, stimulating Z-ring assembly and thereby promoting cell division earlier in the cell cycle. Its recruitment to the Z-ring requires functional FtsA or ZipA. The polypeptide is Cell division protein ZapB (Haemophilus influenzae (strain 86-028NP)).